The primary structure comprises 212 residues: Thymidylate kinase (212 aa).

Position 11–18 (11–18) interacts with ATP; sequence GPEGAGKT.

It belongs to the thymidylate kinase family.

The enzyme catalyses dTMP + ATP = dTDP + ADP. Phosphorylation of dTMP to form dTDP in both de novo and salvage pathways of dTTP synthesis. This chain is Thymidylate kinase, found in Streptococcus pneumoniae (strain CGSP14).